Consider the following 122-residue polypeptide: Large ribosomal subunit protein bL12 (122 aa).

It belongs to the bacterial ribosomal protein bL12 family. In terms of assembly, homodimer. Part of the ribosomal stalk of the 50S ribosomal subunit. Forms a multimeric L10(L12)X complex, where L10 forms an elongated spine to which 2 to 4 L12 dimers bind in a sequential fashion. Binds GTP-bound translation factors.

Forms part of the ribosomal stalk which helps the ribosome interact with GTP-bound translation factors. Is thus essential for accurate translation. The protein is Large ribosomal subunit protein bL12 of Yersinia enterocolitica serotype O:8 / biotype 1B (strain NCTC 13174 / 8081).